The chain runs to 271 residues: NADH-quinone oxidoreductase subunit B (271 aa).

C37, C38, C103, and C132 together coordinate [4Fe-4S] cluster. Positions 227–271 (LAPPSVFGRAKRIPVDPKPSDEARAHGPGPTTESIGDVDGPDRGI) are disordered. The span at 239–251 (IPVDPKPSDEARA) shows a compositional bias: basic and acidic residues.

The protein belongs to the complex I 20 kDa subunit family. As to quaternary structure, NDH-1 is composed of 14 different subunits. Subunits NuoB, C, D, E, F, and G constitute the peripheral sector of the complex. The cofactor is [4Fe-4S] cluster.

The protein localises to the cell membrane. It carries out the reaction a quinone + NADH + 5 H(+)(in) = a quinol + NAD(+) + 4 H(+)(out). Functionally, NDH-1 shuttles electrons from NADH, via FMN and iron-sulfur (Fe-S) centers, to quinones in the respiratory chain. The immediate electron acceptor for the enzyme in this species is believed to be a menaquinone. Couples the redox reaction to proton translocation (for every two electrons transferred, four hydrogen ions are translocated across the cytoplasmic membrane), and thus conserves the redox energy in a proton gradient. The polypeptide is NADH-quinone oxidoreductase subunit B (Frankia casuarinae (strain DSM 45818 / CECT 9043 / HFP020203 / CcI3)).